The primary structure comprises 479 residues: Aspartyl/glutamyl-tRNA(Asn/Gln) amidotransferase subunit B (479 aa).

This sequence belongs to the GatB/GatE family. GatB subfamily. In terms of assembly, heterotrimer of A, B and C subunits.

The catalysed reaction is L-glutamyl-tRNA(Gln) + L-glutamine + ATP + H2O = L-glutaminyl-tRNA(Gln) + L-glutamate + ADP + phosphate + H(+). It carries out the reaction L-aspartyl-tRNA(Asn) + L-glutamine + ATP + H2O = L-asparaginyl-tRNA(Asn) + L-glutamate + ADP + phosphate + 2 H(+). In terms of biological role, allows the formation of correctly charged Asn-tRNA(Asn) or Gln-tRNA(Gln) through the transamidation of misacylated Asp-tRNA(Asn) or Glu-tRNA(Gln) in organisms which lack either or both of asparaginyl-tRNA or glutaminyl-tRNA synthetases. The reaction takes place in the presence of glutamine and ATP through an activated phospho-Asp-tRNA(Asn) or phospho-Glu-tRNA(Gln). The protein is Aspartyl/glutamyl-tRNA(Asn/Gln) amidotransferase subunit B of Clostridium beijerinckii (strain ATCC 51743 / NCIMB 8052) (Clostridium acetobutylicum).